A 193-amino-acid chain; its full sequence is ATP synthase subunit b 1 (193 aa).

Residues 13 to 32 form a disordered region; that stretch reads PAVTGGDTHSGTGVPAEAHG. Residues 40–60 traverse the membrane as a helical segment; that stretch reads ATFPSQLLWLAITFGLFYLFL.

Belongs to the ATPase B chain family. As to quaternary structure, F-type ATPases have 2 components, F(1) - the catalytic core - and F(0) - the membrane proton channel. F(1) has five subunits: alpha(3), beta(3), gamma(1), delta(1), epsilon(1). F(0) has three main subunits: a(1), b(2) and c(10-14). The alpha and beta chains form an alternating ring which encloses part of the gamma chain. F(1) is attached to F(0) by a central stalk formed by the gamma and epsilon chains, while a peripheral stalk is formed by the delta and b chains.

It localises to the cell inner membrane. F(1)F(0) ATP synthase produces ATP from ADP in the presence of a proton or sodium gradient. F-type ATPases consist of two structural domains, F(1) containing the extramembraneous catalytic core and F(0) containing the membrane proton channel, linked together by a central stalk and a peripheral stalk. During catalysis, ATP synthesis in the catalytic domain of F(1) is coupled via a rotary mechanism of the central stalk subunits to proton translocation. Functionally, component of the F(0) channel, it forms part of the peripheral stalk, linking F(1) to F(0). The protein is ATP synthase subunit b 1 of Mesorhizobium japonicum (strain LMG 29417 / CECT 9101 / MAFF 303099) (Mesorhizobium loti (strain MAFF 303099)).